We begin with the raw amino-acid sequence, 197 residues long: Large ribosomal subunit protein uL10 (197 aa).

A disordered region spans residues 163 to 197; that stretch reads GAPAAAEAPAAEESADSAAEAAAEAPAEAPAAEEN.

The protein belongs to the universal ribosomal protein uL10 family. In terms of assembly, part of the ribosomal stalk of the 50S ribosomal subunit. The N-terminus interacts with L11 and the large rRNA to form the base of the stalk. The C-terminus forms an elongated spine to which L12 dimers bind in a sequential fashion forming a multimeric L10(L12)X complex.

In terms of biological role, forms part of the ribosomal stalk, playing a central role in the interaction of the ribosome with GTP-bound translation factors. The sequence is that of Large ribosomal subunit protein uL10 from Pseudarthrobacter chlorophenolicus (strain ATCC 700700 / DSM 12829 / CIP 107037 / JCM 12360 / KCTC 9906 / NCIMB 13794 / A6) (Arthrobacter chlorophenolicus).